The following is a 477-amino-acid chain: 23S rRNA (uracil(1939)-C(5))-methyltransferase RlmD (477 aa).

A TRAM domain is found at 7-66 (KTENFPPDWLLVESLDLEAQGVAHRADGKVVFIKGALPFELVSANVHRKKNNWEQGVVTA). Positions 79, 89, 92, and 171 each coordinate [4Fe-4S] cluster. Residues Gln-280, Phe-309, Asn-314, Glu-330, Asn-365, and Asp-386 each coordinate S-adenosyl-L-methionine. Cys-432 functions as the Nucleophile in the catalytic mechanism.

It belongs to the class I-like SAM-binding methyltransferase superfamily. RNA M5U methyltransferase family. RlmD subfamily.

It catalyses the reaction uridine(1939) in 23S rRNA + S-adenosyl-L-methionine = 5-methyluridine(1939) in 23S rRNA + S-adenosyl-L-homocysteine + H(+). Catalyzes the formation of 5-methyl-uridine at position 1939 (m5U1939) in 23S rRNA. The protein is 23S rRNA (uracil(1939)-C(5))-methyltransferase RlmD of Albidiferax ferrireducens (strain ATCC BAA-621 / DSM 15236 / T118) (Rhodoferax ferrireducens).